The following is a 156-amino-acid chain: SsrA-binding protein (156 aa).

The tract at residues 135–156 (HALRERQDRREADRAMSERKDR) is disordered.

This sequence belongs to the SmpB family.

Its subcellular location is the cytoplasm. Required for rescue of stalled ribosomes mediated by trans-translation. Binds to transfer-messenger RNA (tmRNA), required for stable association of tmRNA with ribosomes. tmRNA and SmpB together mimic tRNA shape, replacing the anticodon stem-loop with SmpB. tmRNA is encoded by the ssrA gene; the 2 termini fold to resemble tRNA(Ala) and it encodes a 'tag peptide', a short internal open reading frame. During trans-translation Ala-aminoacylated tmRNA acts like a tRNA, entering the A-site of stalled ribosomes, displacing the stalled mRNA. The ribosome then switches to translate the ORF on the tmRNA; the nascent peptide is terminated with the 'tag peptide' encoded by the tmRNA and targeted for degradation. The ribosome is freed to recommence translation, which seems to be the essential function of trans-translation. This is SsrA-binding protein from Kineococcus radiotolerans (strain ATCC BAA-149 / DSM 14245 / SRS30216).